A 341-amino-acid chain; its full sequence is L-threonine 3-dehydrogenase (341 aa).

Cysteine 38 serves as a coordination point for Zn(2+). Catalysis depends on charge relay system residues threonine 40 and histidine 43. Positions 63, 64, 93, 96, 99, and 107 each coordinate Zn(2+). NAD(+) contacts are provided by residues isoleucine 175, aspartate 195, arginine 200, 262–264, and 286–287; these read LGI and IY.

Belongs to the zinc-containing alcohol dehydrogenase family. In terms of assembly, homotetramer. It depends on Zn(2+) as a cofactor.

It is found in the cytoplasm. The enzyme catalyses L-threonine + NAD(+) = (2S)-2-amino-3-oxobutanoate + NADH + H(+). It participates in amino-acid degradation; L-threonine degradation via oxydo-reductase pathway; glycine from L-threonine: step 1/2. Catalyzes the NAD(+)-dependent oxidation of L-threonine to 2-amino-3-ketobutyrate. The protein is L-threonine 3-dehydrogenase of Edwardsiella ictaluri (strain 93-146).